Consider the following 993-residue polypeptide: Serine/threonine-protein phosphatase 6 regulatory ankyrin repeat subunit B (993 aa).

ANK repeat units lie at residues 7–36, 40–69, 73–102, 106–135, 139–168, 172–201, 205–234, 238–267, 271–301, 305–334, 338–367, 371–400, 404–433, 437–466, 470–498, 531–561, 566–595, 599–628, 633–662, 669–698, 702–731, 735–764, 771–800, 803–832, 838–867, 871–901, 905–934, and 941–970; these read TDQP…DVNT, EKRT…RVNA, MWLT…DVNA, NWQT…SVNV, GGRT…NINA, KDRR…EVTC, KGYT…EIDE, YGNT…NVNQ, NGFT…DVNI, DGKS…EIDC, DGNT…DTAK, HSMF…EIDT, FGRT…DFHK, CGRT…NVNE, WGRT…DNSE, EGYN…GFEE, ATKS…DLDI, KGRT…SIFV, TKRT…NPEA, KGQT…NVDT, LGCT…SILC, RGRT…SEED, QGYT…FRKF, NPFT…SSIV, KGRT…PVNA, SGKT…DLTV, DLNT…DESL, and ALQT…CVLA.

Protein phosphatase 6 (PP6) holoenzyme is proposed to be a heterotrimeric complex formed by the catalytic subunit, a SAPS domain-containing subunit (PP6R) and an ankyrin repeat-domain containing regulatory subunit (ARS). Interacts with PPP6R1.

Functionally, putative regulatory subunit of protein phosphatase 6 (PP6) that may be involved in the recognition of phosphoprotein substrates. This is Serine/threonine-protein phosphatase 6 regulatory ankyrin repeat subunit B (ANKRD44) from Homo sapiens (Human).